Reading from the N-terminus, the 637-residue chain is MSQTAAHLMERILQPAPEPFALLYRPESSGPGLLDVLIGEMSEPQVLADIDLPATSIGAPRLDVLALIPYRQIAERGFEAVDDESPLLAMNITEQQSISIERLLGMLPNVPIQLNSERFDLSDASYAEIVSQVIANEIGSGEGANFVIKRTFLAEISEYGPASALSFFRHLLEREKGAYWTFIIHTGSRTFVGASPERHISIKDGLSVMNPISGTYRYPPAGPNLSEVMDFLADRKEADELYMVVDEELKMMARICEDGGHVLGPYLKEMAHLAHTEYFIEGKTHRDVREILRETLFAPTVTGSPLESACRVIQRYEPQGRAYYSGMAALIGSDGKGGRSLDSAILIRTADIDNSGEVRISVGSTIVRHSDPMTEAAESRAKATGLISALKNQAPSRFGNHLQVRAALASRNAYVSDFWLMDSQQREQIQADFSGRQVLIVDAEDTFTSMIAKQLRALGLVVTVCSFSDEYSFEGYDLVIMGPGPGNPSEVQQPKINHLHVAIRSLLSQQRPFLAVCLSHQVLSLCLGLELQRKAIPNQGVQKQIDLFGNVERVGFYNTFAAQSSSDRLDIDGIGTVEISRDSETGEVHALRGPSFASMQFHAESLLTQEGPRIIADLLRHALIHTPVENNASAAGR.

Positions 1–434 (MSQTAAHLME…QREQIQADFS (434 aa)) are anthranilate synthase component I. Positions 437 to 628 (QVLIVDAEDT…LRHALIHTPV (192 aa)) constitute a Glutamine amidotransferase type-1 domain. Catalysis depends on for GATase activity residues C517, H602, and E604.

It carries out the reaction chorismate + L-glutamine = anthranilate + pyruvate + L-glutamate + H(+). Its pathway is antibiotic biosynthesis; phenazine biosynthesis. Its function is as follows. Involved in the biosynthesis of the antibiotic, phenazine, a nitrogen-containing heterocyclic molecule having important roles in virulence, competition and biological control. This chain is Anthranilate synthase, phenazine specific (phzB), found in Pseudomonas chlororaphis (Pseudomonas aureofaciens).